The primary structure comprises 697 residues: MEKYEKTKVVGRGAFGIVHLCRRRTDSALVILKEIPVEQMTRDERLAAQNECQVLKLLSHPNIIEYYENFLEDKALMIAMEYAPGGTLADYIQKRCNSLLDEDTILHSFVQILLALYHVHNKLILHRDLKTQNILLDKHQMIVKIGDFGISKILVSKSKAYTVVGTPCYISPELCEGKPYNQKSDIWALGCVLYELASLKRAFEAANLPALVLKIMSGTFAPISDRYSPELRQLILNMLNLDPSKRPQLNEIMAHAICIRPLLNLYTDIGNVKMRRIEKPLSNVQAGPHGRPGGWITSTRTRGGLSSLTSSKMMHPLPLFSVYTWGSGISTPLRLPMLNTEVIQVSLGRTQKMGVTKSGRLITWEAPSVGSGEPTLPGAVEQMQPQFISRFLEGQSGVTIKSVSCGDLFTTCLTDRGIIMTFGSGSNGCLGHGNFNDVTQPKIVEALLGYELVQVSCGASHVLAVTNEREVFSWGRGDNGRLGLATQDSHNCPQQVSLPADFEAQRVLCGVDCSMIMSTQHQILACGNNRFNKLGLDKVSGTEEPSSFCQVEEVHLFQLVQSAPLNTEKIVYIDIGTAHSVAVTEKGQCFTFGSNQHGQLGCSHRRSSRVPYQVSGLQGITMAACGDAFTLAIGAEGEVYTWGKGARGRLGRKEEDFGIPKPVQLDESHAFTVTSVACCHGNTLLAVKPFFEEPGPK.

Residues 4–263 enclose the Protein kinase domain; the sequence is YEKTKVVGRG…AHAICIRPLL (260 aa). Residues 10–18 and Lys-33 contribute to the ATP site; that span reads VGRGAFGIV. Asp-128 functions as the Proton acceptor in the catalytic mechanism. Thr-162 is modified (phosphothreonine; by autocatalysis). RCC1 repeat units follow at residues 417-468, 469-520, 521-586, 587-636, and 637-689; these read GIIM…VTNE, REVF…MSTQ, HQIL…VTEK, GQCF…IGAE, and GEVY…AVKP.

This sequence belongs to the protein kinase superfamily. NEK Ser/Thr protein kinase family. NIMA subfamily. Requires Mg(2+) as cofactor.

It localises to the cytoplasm. Its subcellular location is the cytoskeleton. The protein resides in the cell projection. The protein localises to the cilium. It is found in the cilium axoneme. It localises to the microtubule organizing center. Its subcellular location is the centrosome. The enzyme catalyses L-seryl-[protein] + ATP = O-phospho-L-seryl-[protein] + ADP + H(+). The catalysed reaction is L-threonyl-[protein] + ATP = O-phospho-L-threonyl-[protein] + ADP + H(+). Its function is as follows. Required for renal tubular integrity. May regulate local cytoskeletal structure in kidney tubule epithelial cells. May regulate ciliary biogenesis through targeting of proteins to the cilia. Plays a role in organogenesis and is involved in the regulation of the Hippo signaling pathway. The sequence is that of Serine/threonine-protein kinase Nek8 (nek8) from Danio rerio (Zebrafish).